Here is a 199-residue protein sequence, read N- to C-terminus: MKITALLVLKCDPETREPVILANVSDLSQFGKFSFYRSNFEEFIVFIARTVARRTPPGQRQSVKHEEYKVHAYNINGLCAVGFMDDHYPVRSAFSLLNQVLDVYQKDYGDTWRFENSSQPWPYLKEASDKFRDPAEADKLLKIQRELDETKIILHKTIDGVLARGEKLDSLVEKSSELSLASKMFYKQAKKTNSCCTLL.

Residues 7-131 enclose the Longin domain; sequence LVLKCDPETR…PYLKEASDKF (125 aa). The 61-residue stretch at 139-199 folds into the v-SNARE coiled-coil homology domain; the sequence is KLLKIQRELD…KKTNSCCTLL (61 aa). Residue cysteine 195 is the site of S-palmitoyl cysteine attachment. Cysteine 196 is modified (cysteine methyl ester). Cysteine 196 is lipidated: S-geranylgeranyl cysteine. Positions 197–199 are cleaved as a propeptide — removed in mature form; the sequence is TLL.

The protein belongs to the synaptobrevin family. Interacts with SYP41. Core constituent of the SNARE complex required for membrane fusion at the trans-Golgi network.

The protein resides in the cell membrane. Involved in the secretory pathway. Essential for membrane fusion mediated by either SYP41 or SYP61; triggers the fusion of phospholipid vesicles containing SYP41 or SYP61 and VTI12. The polypeptide is VAMP-like protein YKT62 (Arabidopsis thaliana (Mouse-ear cress)).